The chain runs to 111 residues: Cornifelin (111 aa).

The protein belongs to the cornifelin family. As to quaternary structure, directly or indirectly cross-linked to CE proteins loricin and involucrin (IVL).

The protein resides in the cytoplasm. Part of the insoluble cornified cell envelope (CE) of stratified squamous epithelia. This Mus musculus (Mouse) protein is Cornifelin (Cnfn).